The chain runs to 190 residues: LOB domain-containing protein 1 (190 aa).

Polar residues predominate over residues 1-11; it reads MESKSDASVAT. Residues 1–27 form a disordered region; sequence MESKSDASVATTPIISSSSSPPPSLSP. Residues 32–133 form the LOB domain; sequence SPCAACKILR…AQLAKAQVEM (102 aa).

It belongs to the LOB domain-containing protein family. In terms of tissue distribution, expressed in young shoots, roots, stems, leaves and flowers.

This Arabidopsis thaliana (Mouse-ear cress) protein is LOB domain-containing protein 1 (LBD1).